The sequence spans 146 residues: Ribosome maturation factor RimP (146 aa).

This sequence belongs to the RimP family.

It localises to the cytoplasm. In terms of biological role, required for maturation of 30S ribosomal subunits. This chain is Ribosome maturation factor RimP, found in Helicobacter pylori (strain J99 / ATCC 700824) (Campylobacter pylori J99).